A 308-amino-acid chain; its full sequence is ATP synthase gamma chain (308 aa).

The protein belongs to the ATPase gamma chain family. F-type ATPases have 2 components, CF(1) - the catalytic core - and CF(0) - the membrane proton channel. CF(1) has five subunits: alpha(3), beta(3), gamma(1), delta(1), epsilon(1). CF(0) has three main subunits: a, b and c.

Its subcellular location is the cell inner membrane. Functionally, produces ATP from ADP in the presence of a proton gradient across the membrane. The gamma chain is believed to be important in regulating ATPase activity and the flow of protons through the CF(0) complex. This Bartonella tribocorum (strain CIP 105476 / IBS 506) protein is ATP synthase gamma chain.